Reading from the N-terminus, the 130-residue chain is Universal stress protein MSMEG_4207 (130 aa).

Position 104 is an N6-acetyllysine (K104).

It belongs to the universal stress protein A family. Acetylated on Lys-104 by PatA in the presence of acetyl-CoA as an acetyl donor.

The chain is Universal stress protein MSMEG_4207 from Mycolicibacterium smegmatis (strain ATCC 700084 / mc(2)155) (Mycobacterium smegmatis).